The primary structure comprises 272 residues: Iodotyrosine deiodinase (272 aa).

A helical transmembrane segment spans residues 5–25 (LSGVSYGLLAGILAMLIHLVY). FMN-binding positions include 82-86 (RRSVR), Ser-110, and 110-111 (SG). Residues Ala-112, Glu-139, Tyr-143, and Lys-164 each coordinate 3-iodo-L-tyrosine. FMN is bound by residues 219-221 (TST) and Arg-261.

The protein belongs to the nitroreductase family. It depends on FMN as a cofactor.

Its subcellular location is the membrane. The catalysed reaction is 2 iodide + L-tyrosine + 2 NADP(+) = 3,5-diiodo-L-tyrosine + 2 NADPH + H(+). It carries out the reaction iodide + L-tyrosine + NADP(+) = 3-iodo-L-tyrosine + NADPH. The enzyme catalyses 3-iodo-L-tyrosine + iodide + NADP(+) = 3,5-diiodo-L-tyrosine + NADPH + H(+). It catalyses the reaction L-tyrosine + chloride + NADP(+) = 3-chloro-L-tyrosine + NADPH. The catalysed reaction is bromide + L-tyrosine + NADP(+) = 3-bromo-L-tyrosine + NADPH. In terms of biological role, catalyzes the dehalogenation of halotyrosines such as 3,5-diiodo-L-tyrosine. Likely to also catalyze the dehalogenation of other halotyrosines such as 3-bromo-L-tyrosine, 3-chloro-L-tyrosine and 3-iodo-L-tyrosine. The protein is Iodotyrosine deiodinase of Hydra vulgaris (Hydra).